We begin with the raw amino-acid sequence, 1185 residues long: Zinc finger SWIM domain-containing protein 5 (1185 aa).

A compositionally biased stretch (basic and acidic residues) spans 1 to 10; sequence MADGGEREEL. Disordered stretches follow at residues 1–45 and 123–153; these read MADG…GGAG and AGAAGGAAGASPAEEGPQPPPGAAAPAGSAP. The SWIM-type zinc finger occupies 219 to 256; the sequence is YKVAISFDRCKITSVTCGCGNKDIFYCAHVVALSLYRI.

This chain is Zinc finger SWIM domain-containing protein 5 (ZSWIM5), found in Homo sapiens (Human).